We begin with the raw amino-acid sequence, 169 residues long: Protein-export protein SecB (169 aa).

This sequence belongs to the SecB family. Homotetramer, a dimer of dimers. One homotetramer interacts with 1 SecA dimer.

Its subcellular location is the cytoplasm. In terms of biological role, one of the proteins required for the normal export of preproteins out of the cell cytoplasm. It is a molecular chaperone that binds to a subset of precursor proteins, maintaining them in a translocation-competent state. It also specifically binds to its receptor SecA. This Pseudoalteromonas atlantica (strain T6c / ATCC BAA-1087) protein is Protein-export protein SecB.